The chain runs to 226 residues: Lipoprotein-releasing system ATP-binding protein LolD (226 aa).

The ABC transporter domain maps to 6 to 226 (LKLDNIRRAF…KMSEGLLVEV (221 aa)). 42-49 (GPSGAGKS) lines the ATP pocket.

This sequence belongs to the ABC transporter superfamily. Lipoprotein translocase (TC 3.A.1.125) family. As to quaternary structure, the complex is composed of two ATP-binding proteins (LolD) and two transmembrane proteins (LolC and LolE).

The protein localises to the cell inner membrane. Its function is as follows. Part of the ABC transporter complex LolCDE involved in the translocation of mature outer membrane-directed lipoproteins, from the inner membrane to the periplasmic chaperone, LolA. Responsible for the formation of the LolA-lipoprotein complex in an ATP-dependent manner. This Paramagnetospirillum magneticum (strain ATCC 700264 / AMB-1) (Magnetospirillum magneticum) protein is Lipoprotein-releasing system ATP-binding protein LolD.